The following is a 490-amino-acid chain: Cytochrome P450 2C2 (490 aa).

Cys-435 lines the heme pocket.

The protein belongs to the cytochrome P450 family. Requires heme as cofactor.

Its subcellular location is the endoplasmic reticulum membrane. The protein resides in the microsome membrane. It catalyses the reaction an organic molecule + reduced [NADPH--hemoprotein reductase] + O2 = an alcohol + oxidized [NADPH--hemoprotein reductase] + H2O + H(+). Cytochromes P450 are a group of heme-thiolate monooxygenases. In liver microsomes, this enzyme is involved in an NADPH-dependent electron transport pathway. It oxidizes a variety of structurally unrelated compounds, including steroids, fatty acids, and xenobiotics. In the epoxidation of arachidonic acid it generates only 14,15- and 11,12-cis-epoxyeicosatrienoic acids. In Oryctolagus cuniculus (Rabbit), this protein is Cytochrome P450 2C2 (CYP2C2).